The following is a 707-amino-acid chain: E3 ubiquitin-protein ligase Praja-2 (707 aa).

Residues 1–10 are compositionally biased toward basic and acidic residues; it reads MSQYTEKEPS. Disordered regions lie at residues 1 to 32, 72 to 120, and 250 to 314; these read MSQYTEKEPSVMDQESSKAAWPKPAGGYQTIT, PKEN…PSIA, and QNGQ…VRPK. N-acetylserine is present on S2. Composition is skewed to polar residues over residues 74–83 and 109–119; these read ENTSGSSSLD and LNQSTESSPSI. The segment covering 257–276 has biased composition (basic and acidic residues); the sequence is RSSEDGVVRKRRQDDTDQGR. Positions 293–308 are enriched in polar residues; it reads EQNTSDRANHHGSSPE. Phosphoserine occurs at positions 306 and 320. The residue at position 339 (S339) is a Phosphoserine; by PKA. 2 disordered regions span residues 379 to 405 and 424 to 493; these read RVTQRETERNRVTSENGATASGRQESR and EDSS…QTSL. Residues 381–390 show a composition bias toward basic and acidic residues; that stretch reads TQRETERNRV. T385 carries the post-translational modification Phosphothreonine; by PKA. The segment covering 391-401 has biased composition (polar residues); sequence TSENGATASGR. The residue at position 430 (S430) is a Phosphoserine. Positions 465-481 are enriched in acidic residues; that stretch reads NDPELQSDSSGPEEENQ. Over residues 482-491 the composition is skewed to polar residues; that stretch reads ELSLQEGEQT. The interval 530 to 707 is interaction with PRKAR1A, PRKAR2A and PRKAR2B; that stretch reads DGNNNLEDDS…PANDNAEEAP (178 aa). Positions 549–569 are mediates interaction with TBC1D31; sequence WSLFDGFADGLGVAEAISYVD. Residues 633-674 form an RING-type; atypical zinc finger; the sequence is CPICCSEYIKDDIATELPCHHFFHKPCVSIWLQKSGTCPVCR. Over residues 685 to 701 the composition is skewed to low complexity; it reads SAAASSDPDPDASPAND. A disordered region spans residues 685–707; it reads SAAASSDPDPDASPANDNAEEAP.

As to quaternary structure, binds ubiquitin-conjugating enzymes (E2s). In vitro, interacts with the ubiquitin-conjugating enzyme, UBE2D2. The phosphorylated form interacts with PRKAR1A, PRKAR2A and PRKAR2B. Binds the catalytic subunits of cAMP-dependent protein kinase. Interacts with MFHAS1. Interacts with TBC1D31; the interaction is direct and recruits PJA2 to centrosomes.

It is found in the cytoplasm. The protein localises to the cell membrane. Its subcellular location is the endoplasmic reticulum membrane. The protein resides in the golgi apparatus membrane. It localises to the synapse. It is found in the postsynaptic density. The protein localises to the cytoskeleton. Its subcellular location is the microtubule organizing center. The protein resides in the centrosome. The catalysed reaction is S-ubiquitinyl-[E2 ubiquitin-conjugating enzyme]-L-cysteine + [acceptor protein]-L-lysine = [E2 ubiquitin-conjugating enzyme]-L-cysteine + N(6)-ubiquitinyl-[acceptor protein]-L-lysine.. Its pathway is protein modification; protein ubiquitination. Has E2-dependent E3 ubiquitin-protein ligase activity. Responsible for ubiquitination of cAMP-dependent protein kinase type I and type II-alpha/beta regulatory subunits and for targeting them for proteasomal degradation. Essential for PKA-mediated long-term memory processes. Through the ubiquitination of MFHAS1, positively regulates the TLR2 signaling pathway that leads to the activation of the downstream p38 and JNK MAP kinases and promotes the polarization of macrophages toward the pro-inflammatory M1 phenotype. Plays a role in ciliogenesis by ubiquitinating OFD1. This chain is E3 ubiquitin-protein ligase Praja-2 (Pja2), found in Mus musculus (Mouse).